The following is a 538-amino-acid chain: Serine/threonine-protein phosphatase 5 (538 aa).

TPR repeat units follow at residues 13–46 (AEEF…NSNN), 48–80 (VYWA…DSRY), and 81–114 (SKGY…SPND). A run of 2 helical transmembrane segments spans residues 163–183 (SSMP…VVAV) and 185–205 (GFAT…TFWW). 4 residues coordinate Mn(2+): D282, H284, D311, and N343. The active-site Proton donor is the H344. Mn(2+) is bound by residues H392 and H467.

This sequence belongs to the PPP phosphatase family. PP-5 (PP-T) subfamily. Interacts with PHYA and PHYB, mostly when they are phosphorylated and in Pfr forms. Mn(2+) serves as cofactor.

The protein resides in the endoplasmic reticulum membrane. Its subcellular location is the nucleus membrane. It is found in the cytoplasm. It localises to the nucleus. The protein localises to the nucleoplasm. The protein resides in the nucleus speckle. The enzyme catalyses O-phospho-L-seryl-[protein] + H2O = L-seryl-[protein] + phosphate. It catalyses the reaction O-phospho-L-threonyl-[protein] + H2O = L-threonyl-[protein] + phosphate. Activated by arachidonic acid (AA). Isoform 2 dephosphorylates phosphorylated phytochromes, with a preference toward Pfr forms, and enhances phytochrome-mediated photoresponses, probably by enhancing their stability and their binding affinity for light signal transducers such as NDPK2. Can use para-nitrophenylphosphate (pNPP) as substrate. This is Serine/threonine-protein phosphatase 5 (PAPP5) from Arabidopsis thaliana (Mouse-ear cress).